The chain runs to 378 residues: Putative zinc finger protein 302L (378 aa).

The segment at 3 to 25 (IVCEFCDKSFDSKSKVNAHQRTK) adopts a C2H2-type; degenerate zinc-finger fold.

It belongs to the IIV-6 302L family.

This chain is Putative zinc finger protein 302L, found in Invertebrate iridescent virus 6 (IIV-6).